A 444-amino-acid polypeptide reads, in one-letter code: Methylenetetrahydrofolate--tRNA-(uracil-5-)-methyltransferase TrmFO (444 aa).

FAD is bound at residue 9–14 (GAGMAG).

It belongs to the MnmG family. TrmFO subfamily. FAD is required as a cofactor.

It localises to the cytoplasm. The enzyme catalyses uridine(54) in tRNA + (6R)-5,10-methylene-5,6,7,8-tetrahydrofolate + NADH + H(+) = 5-methyluridine(54) in tRNA + (6S)-5,6,7,8-tetrahydrofolate + NAD(+). It catalyses the reaction uridine(54) in tRNA + (6R)-5,10-methylene-5,6,7,8-tetrahydrofolate + NADPH + H(+) = 5-methyluridine(54) in tRNA + (6S)-5,6,7,8-tetrahydrofolate + NADP(+). In terms of biological role, catalyzes the folate-dependent formation of 5-methyl-uridine at position 54 (M-5-U54) in all tRNAs. The sequence is that of Methylenetetrahydrofolate--tRNA-(uracil-5-)-methyltransferase TrmFO from Cereibacter sphaeroides (strain ATCC 17023 / DSM 158 / JCM 6121 / CCUG 31486 / LMG 2827 / NBRC 12203 / NCIMB 8253 / ATH 2.4.1.) (Rhodobacter sphaeroides).